A 153-amino-acid chain; its full sequence is Natriuretic peptides A (153 aa).

An N-terminal signal peptide occupies residues 1–25 (MGSFSTITASFLLFLACQLLWQTGA). 2 propeptides span residues 26-123 (NPVY…AAPR) and 93-103 (DGGALGRGSWD). A disordered region spans residues 62–104 (VLSEQNEEAGAALSPLPEVPPWAGEVNPAQRDGGALGRGSWDS). At serine 129 the chain carries Phosphoserine. A disulfide bridge connects residues cysteine 130 and cysteine 146. Residues 147 to 151 (NSFRY) are important for degradation of atrial natriuretic peptide by IDE.

It belongs to the natriuretic peptide family. As to quaternary structure, homodimer; disulfide-linked antiparallel dimer. Post-translationally, the precursor molecule is proteolytically cleaved by CORIN at Arg-123 to produce the atrial natriuretic peptide. Undergoes further proteolytic cleavage by unknown proteases to give rise to long-acting natriuretic peptide, vessel dilator and kaliuretic peptide. Additional processing gives rise to the auriculin and atriopeptin peptides. In the kidneys, alternative processing by an unknown protease results in the peptide urodilatin. Cleavage by MME initiates degradation of the factor and thereby regulates its activity. Degradation by IDE results in reduced activation of NPR1 (in vitro). During IDE degradation, the resulting products can temporarily stimulate NPR2 to produce cGMP, before the fragments are completely degraded and inactivated by IDE (in vitro). In terms of processing, degraded by IDE. Post-translationally, phosphorylation on Ser-129 decreases vasorelaxant activity.

It localises to the secreted. The protein localises to the perikaryon. Its subcellular location is the cell projection. Functionally, hormone that plays a key role in mediating cardio-renal homeostasis, and is involved in vascular remodeling and regulating energy metabolism. Acts by specifically binding and stimulating NPR1 to produce cGMP, which in turn activates effector proteins, such as PRKG1, that drive various biological responses. Regulates vasodilation, natriuresis, diuresis and aldosterone synthesis and is therefore essential for regulating blood pressure, controlling the extracellular fluid volume and maintaining the fluid-electrolyte balance. Also involved in inhibiting cardiac remodeling and cardiac hypertrophy by inducing cardiomyocyte apoptosis and attenuating the growth of cardiomyocytes and fibroblasts. Plays a role in female pregnancy by promoting trophoblast invasion and spiral artery remodeling in uterus, and thus prevents pregnancy-induced hypertension. In adipose tissue, acts in various cGMP- and PKG-dependent pathways to regulate lipid metabolism and energy homeostasis. This includes up-regulating lipid metabolism and mitochondrial oxygen utilization by activating the AMP-activated protein kinase (AMPK), and increasing energy expenditure by acting via MAPK11 to promote the UCP1-dependent thermogenesis of brown adipose tissue. Binds the clearance receptor NPR3 which removes the hormone from circulation. In terms of biological role, may have a role in cardio-renal homeostasis through regulation of natriuresis, diuresis, vasodilation, and inhibiting aldosterone synthesis. In vitro, promotes the production of cGMP and induces vasodilation. May promote natriuresis, at least in part, by enhancing prostaglandin E2 synthesis resulting in the inhibition of renal Na+-K+-ATPase. However reports on the involvement of this peptide in mammal blood volume and blood pressure homeostasis are conflicting; according to a report, in vivo it is not sufficient to activate cGMP and does not inhibit collecting duct transport nor effect diuresis and natriuresis. Appears to bind to specific receptors that are distinct from the receptors bound by atrial natriuretic peptide and vessel dilator. Possibly enhances protein excretion in urine by decreasing proximal tubular protein reabsorption. Its function is as follows. May have a role in cardio-renal homeostasis through regulation of natriuresis, diuresis, and vasodilation. In vitro, promotes the production of cGMP and induces vasodilation. May promote natriuresis, at least in part, by enhancing prostaglandin E2 synthesis resulting in the inhibition of renal Na+-K+-ATPase. However reports on the involvement of this peptide in mammal blood volume and blood pressure homeostasis are conflicting; according to a report it is not sufficient to activate cGMP and does not inhibit collecting duct transport nor effect diuresis and natriuresis. Appears to bind to specific receptors that are distinct from the receptors bound by the atrial natriuretic and long-acting natriuretic peptides. Possibly functions in protein excretion in urine by maintaining the integrity of the proximal tubules and enhancing protein excretion by decreasing proximal tubular protein reabsorption. May have a role in cardio-renal homeostasis through regulation of diuresis and inhibiting aldosterone synthesis. In vitro, promotes the production of cGMP and induces vasodilation. May promote natriuresis, at least in part, by enhancing prostaglandin E2 synthesis resulting in the inhibition of renal Na+-K+-ATPase. May have a role in potassium excretion but not sodium excretion (natriuresis). Possibly enhances protein excretion in urine by decreasing proximal tubular protein reabsorption. Functionally, hormone produced in the kidneys that appears to be important for maintaining cardio-renal homeostasis. Mediates vasodilation, natriuresis and diuresis primarily in the renal system, in order to maintain the extracellular fluid volume and control the fluid-electrolyte balance. Specifically binds and stimulates cGMP production by renal transmembrane receptors, likely NPR1. Urodilatin not ANP, may be the natriuretic peptide responsible for the regulation of sodium and water homeostasis in the kidney. In terms of biological role, may have a role in cardio-renal homeostasis through regulation of natriuresis and vasodilation. In vivo promotes natriuresis and in vitro, vasodilates renal artery strips. Its function is as follows. May have a role in cardio-renal homeostasis through regulation of regulation of natriuresis and vasodilation. In vivo promotes natriuresis. In vitro, vasodilates intestinal smooth muscle but not smooth muscle strips. May have a role in cardio-renal homeostasis through regulation of natriuresis and vasodilation. In vivo promotes natriuresis. In vitro, selectively vasodilates intestinal and vascular smooth muscle strips. Functionally, may have a role in cardio-renal homeostasis through regulation of natriuresis and vasodilation. In vivo promotes natriuresis. In vitro, selectively vasodilates intestinal smooth muscle but not vascular smooth muscle strips. The polypeptide is Natriuretic peptides A (NPPA) (Felis catus (Cat)).